A 220-amino-acid polypeptide reads, in one-letter code: Ribosomal RNA large subunit methyltransferase E (220 aa).

S-adenosyl-L-methionine is bound by residues G60, W62, D92, D108, and D133. K173 acts as the Proton acceptor in catalysis. The disordered stretch occupies residues 197–220 (RKPKASRDKSSETFILGRQLKQPR).

It belongs to the class I-like SAM-binding methyltransferase superfamily. RNA methyltransferase RlmE family.

Its subcellular location is the cytoplasm. It catalyses the reaction uridine(2552) in 23S rRNA + S-adenosyl-L-methionine = 2'-O-methyluridine(2552) in 23S rRNA + S-adenosyl-L-homocysteine + H(+). Functionally, specifically methylates the uridine in position 2552 of 23S rRNA at the 2'-O position of the ribose in the fully assembled 50S ribosomal subunit. The chain is Ribosomal RNA large subunit methyltransferase E from Burkholderia ambifaria (strain ATCC BAA-244 / DSM 16087 / CCUG 44356 / LMG 19182 / AMMD) (Burkholderia cepacia (strain AMMD)).